The following is a 465-amino-acid chain: Cysteine--tRNA ligase (465 aa).

Cys-27 is a binding site for Zn(2+). Residues Pro-29–His-39 carry the 'HIGH' region motif. Zn(2+) contacts are provided by Cys-207, His-237, and Glu-241. The short motif at Lys-269–Ser-273 is the 'KMSKS' region element. Lys-272 lines the ATP pocket.

This sequence belongs to the class-I aminoacyl-tRNA synthetase family. In terms of assembly, monomer. Zn(2+) serves as cofactor.

It is found in the cytoplasm. The catalysed reaction is tRNA(Cys) + L-cysteine + ATP = L-cysteinyl-tRNA(Cys) + AMP + diphosphate. The chain is Cysteine--tRNA ligase from Helicobacter acinonychis (strain Sheeba).